The sequence spans 463 residues: Matrix remodeling-associated protein 8 (463 aa).

The first 19 residues, Met1–Ala19, serve as a signal peptide directing secretion. Residues Val20 to Gln362 lie on the Extracellular side of the membrane. Ig-like V-type domains lie at Pro29–Thr173 and Pro176–Thr308. 2 disulfides stabilise this stretch: Cys54/Cys153 and Cys202/Cys288. A glycan (N-linked (GlcNAc...) asparagine) is linked at Asn135. Ser244 is subject to Phosphoserine. Positions Arg268–Asp270 match the RGD motif. The disordered stretch occupies residues Glu309 to Leu341. Positions Ser321–Gly335 are enriched in low complexity. Asn324 is a glycosylation site (N-linked (GlcNAc...) asparagine). The helical transmembrane segment at Leu363–Ala383 threads the bilayer. Residues Thr384–Lys463 lie on the Cytoplasmic side of the membrane.

In terms of assembly, homodimer in cis. Does not appear to form trans-homodimers. Interacts with ITGB3; the interaction inhibits ITGAV:ITGB3 heterodimer formation.

The protein localises to the cell membrane. The protein resides in the cell junction. It is found in the tight junction. It localises to the cytoplasm. Its subcellular location is the cell projection. The protein localises to the cilium membrane. The protein resides in the nucleus. In terms of biological role, transmembrane protein which can modulate activity of various signaling pathways, probably via binding to integrin ITGAV:ITGB3. Mediates heterophilic cell-cell interactions in vitro. Inhibits osteoclastogenesis downstream of TNFSF11/RANKL and CSF1, where it may function by attenuating signaling via integrin ITGB3 and MAP kinase p38. Plays a role in cartilage formation where it promotes proliferation and maturation of growth plate chondrocytes. Stimulates formation of primary cilia in chondrocytes. Enhances expression of genes involved in the hedgehog signaling pathway in chondrocytes, including the hedgehog signaling molecule IHH; may also promote signaling via the PTHLH/PTHrP pathway. Plays a role in angiogenesis where it suppresses migration of endothelial cells and also promotes their apoptosis. Inhibits VEGF-induced activation of AKT and p38 MAP kinase in endothelial cells. Also inhibits VTN (vitronectin)-mediated integrin ITGAV:ITGB3 signaling and activation of PTK2/FAK. May play a role in the maturation and maintenance of the blood-brain barrier. In Bos taurus (Bovine), this protein is Matrix remodeling-associated protein 8 (MXRA8).